The primary structure comprises 268 residues: MRFDVFTIFPGMFTGFLTESILKRAQQAGLIEIAIHNIRDWTTDKHRTVDDTPYGGGPGMVMMAPPIVHAVESVLGQEQNSTPIIIMSPSGELFTQDIARQLACFPRLALICGRYEGIDDRVRIILRARELSIGDYVLTGGELAAAVVIDVVSRLVPGVIDPESLAEESHNSGLLEYPQYTRPPIFRGLGVPEILLSGNHAKIAEWRRMMALCRTAARRPDLLARAALTPRDHELLQRCPPDPFAHQGPVYEGDQLERPEGGEQGASR.

S-adenosyl-L-methionine contacts are provided by residues Gly113 and 133 to 138; that span reads IGDYVL. The tract at residues 238 to 268 is disordered; it reads RCPPDPFAHQGPVYEGDQLERPEGGEQGASR.

This sequence belongs to the RNA methyltransferase TrmD family. Homodimer.

Its subcellular location is the cytoplasm. It carries out the reaction guanosine(37) in tRNA + S-adenosyl-L-methionine = N(1)-methylguanosine(37) in tRNA + S-adenosyl-L-homocysteine + H(+). In terms of biological role, specifically methylates guanosine-37 in various tRNAs. This chain is tRNA (guanine-N(1)-)-methyltransferase, found in Thermomicrobium roseum (strain ATCC 27502 / DSM 5159 / P-2).